Here is a 158-residue protein sequence, read N- to C-terminus: MGVFTFEDESTSTIAPARLYKALVKDADAIIPKAVEAIQSIETVEGNGGPGTIKKLTLIEGGETKYVLHKIEAVDEANLRYNYSIVGGVGLPDTIEKISFETKLVEGANGGSIGKVTIKIETKGDAQPNEEEGKAAKARGDAFFKAIENYLSAHPEYN.

Asp8 is a trans-zeatin binding site. 3 residues coordinate Ca(2+): Pro32, Val35, and Ile38. Trans-zeatin is bound by residues Glu60, His69, Tyr81, and Tyr83.

The protein belongs to the BetVI family.

The protein localises to the cytoplasm. Its subcellular location is the cytosol. Class II ribonuclease (RNase). Binds to cytokinins. Interacts with melatonin. This Lupinus luteus (European yellow lupine) protein is Class 10 plant pathogenesis-related protein 2A.